The following is a 116-amino-acid chain: Large ribosomal subunit protein bL17 (116 aa).

Belongs to the bacterial ribosomal protein bL17 family. As to quaternary structure, part of the 50S ribosomal subunit. Contacts protein L32.

This Fusobacterium nucleatum subsp. nucleatum (strain ATCC 25586 / DSM 15643 / BCRC 10681 / CIP 101130 / JCM 8532 / KCTC 2640 / LMG 13131 / VPI 4355) protein is Large ribosomal subunit protein bL17.